The primary structure comprises 452 residues: UDP-N-acetylmuramoylalanine--D-glutamate ligase (452 aa).

119 to 125 (GSNGKTT) is an ATP binding site.

The protein belongs to the MurCDEF family.

It localises to the cytoplasm. The catalysed reaction is UDP-N-acetyl-alpha-D-muramoyl-L-alanine + D-glutamate + ATP = UDP-N-acetyl-alpha-D-muramoyl-L-alanyl-D-glutamate + ADP + phosphate + H(+). Its pathway is cell wall biogenesis; peptidoglycan biosynthesis. In terms of biological role, cell wall formation. Catalyzes the addition of glutamate to the nucleotide precursor UDP-N-acetylmuramoyl-L-alanine (UMA). This is UDP-N-acetylmuramoylalanine--D-glutamate ligase (murD) from Streptococcus pyogenes serotype M1.